We begin with the raw amino-acid sequence, 548 residues long: Chaperonin GroEL 1 (548 aa).

ATP contacts are provided by residues Thr-30–Pro-33, Lys-51, Asp-87–Thr-91, Gly-415, Asn-479–Ala-481, and Asp-495.

This sequence belongs to the chaperonin (HSP60) family. As to quaternary structure, forms a cylinder of 14 subunits composed of two heptameric rings stacked back-to-back. Interacts with the co-chaperonin GroES.

It is found in the cytoplasm. It catalyses the reaction ATP + H2O + a folded polypeptide = ADP + phosphate + an unfolded polypeptide.. Its function is as follows. Together with its co-chaperonin GroES, plays an essential role in assisting protein folding. The GroEL-GroES system forms a nano-cage that allows encapsulation of the non-native substrate proteins and provides a physical environment optimized to promote and accelerate protein folding. The sequence is that of Chaperonin GroEL 1 from Vibrio harveyi (Beneckea harveyi).